A 194-amino-acid polypeptide reads, in one-letter code: MLYFTIKNMKFRNLMKIINALREEEVVAYPTESMFGLGCDPDSISAVNKLIYLKKRKINKGFIIVAANISQLNNYIDCTSLSKNNLNKIFCTWPGFITWLMPPKKDIPCWLIGNNSLIAVRVSNFFPIKKICNIFGKPIISTSANLSGEIPAKNIKEIKHKLGSKIIILDHPIGKYSNPSEIRNGINYKIIRKG.

The YrdC-like domain occupies 11-194 (FRNLMKIINA…GINYKIIRKG (184 aa)).

This sequence belongs to the SUA5 family. TsaC subfamily.

The protein localises to the cytoplasm. It catalyses the reaction L-threonine + hydrogencarbonate + ATP = L-threonylcarbamoyladenylate + diphosphate + H2O. Its function is as follows. Required for the formation of a threonylcarbamoyl group on adenosine at position 37 (t(6)A37) in tRNAs that read codons beginning with adenine. Catalyzes the conversion of L-threonine, HCO(3)(-)/CO(2) and ATP to give threonylcarbamoyl-AMP (TC-AMP) as the acyladenylate intermediate, with the release of diphosphate. The protein is Threonylcarbamoyl-AMP synthase of Wigglesworthia glossinidia brevipalpis.